The primary structure comprises 600 residues: Tripeptidyl-peptidase 1 (600 aa).

A signal peptide spans 1–22 (MNIKFNLIIIILFILFISNVNC). A propeptide spans 23–220 (KKIKNKKHLT…GGGGKVNGIG (198 aa)) (removed in mature form). 3 N-linked (GlcNAc...) asparagine glycosylation sites follow: asparagine 91, asparagine 259, and asparagine 266. The 353-residue stretch at 248 to 600 (YLSPDLIRKE…FDELVKYCLE (353 aa)) folds into the Peptidase S53 domain. Catalysis depends on charge relay system residues glutamate 318 and aspartate 322. The cysteines at positions 411 and 570 are disulfide-linked. N-linked (GlcNAc...) asparagine glycans are attached at residues asparagine 475 and asparagine 483. Serine 514 serves as the catalytic Charge relay system. Ca(2+)-binding residues include aspartate 559, isoleucine 560, glycine 579, and aspartate 581.

As to quaternary structure, monomer. Ca(2+) is required as a cofactor. Activated by autocatalytic proteolytical processing upon acidification. N-glycosylation is required for processing and activity.

The protein resides in the secreted. The catalysed reaction is Release of an N-terminal tripeptide from a polypeptide, but also has endopeptidase activity.. In terms of biological role, serine protease with tripeptidyl-peptidase I activity. This Dictyostelium discoideum (Social amoeba) protein is Tripeptidyl-peptidase 1 (tpp1).